We begin with the raw amino-acid sequence, 113 residues long: Large ribosomal subunit protein eL31 (113 aa).

The protein belongs to the eukaryotic ribosomal protein eL31 family.

The protein is Large ribosomal subunit protein eL31 (RPL31) of Candida glabrata (strain ATCC 2001 / BCRC 20586 / JCM 3761 / NBRC 0622 / NRRL Y-65 / CBS 138) (Yeast).